The chain runs to 305 residues: Oxidoreductase swnR (305 aa).

The protein belongs to the NmrA-type oxidoreductase family. Isoflavone reductase subfamily.

The catalysed reaction is L-pipecolate + O2 = L-1-piperideine-6-carboxylate + H2O2 + H(+). Its pathway is mycotoxin biosynthesis. In terms of biological role, oxidoreductase; part of the gene cluster that mediates the biosynthesis of swainsonine (SW), a cytotoxic fungal alkaloid and a potential cancer therapy drug. Swainsonine production occurs via a multibranched pathway and is dispensable for fungal colonization of plants and infection of insect hosts. The first step of swainsonine biosynthesis is the production of the precursor pipecolic acid (PA) via conversion of L-lysine (Lys) to 1-piperideine-6-carboxylate (P6C) by the aminotransferase swnA, the latter being further reduced to PA by the reductase swnR. PA can be converted from lysine by both the SW biosynthetic cluster and the unclustered genes such as lysine cyclodeaminase. The PKS-NRPS hybrid synthetase swnK uptakes and condensates PA and malonyl-CoA with and without skipping of the ketoreductase (KR) domain in order to produce 3 intermediates, 1-oxoindolizidine, (1S)-1-hydroxyindolizin, and (1R)-1-hydroxyindolizine; with the transisomer (1S)-1-hydroxyindolizin being predominant. The terminal thioester reductase (TE) domain of swnK is involved in reduction of the thioester bond to release the intermediate aldehydes. The oxidoreductase swnN could contribute to the reduction of 1-oxoindolizidine to (1S)-1-hydroxyindolizin and (1R)-1-hydroxyindolizine, contributing to the major route of SW production. The dioxygenase swnH2 would be responsible for the oxidization of (1R)-1-hydroxyindolizine into (1R,2S)-1,2-dihydroxyindolizine and of (1S)-1-hydroxyindolizin to yield both (1R,2S)-1,2-dihydroxyindolizine and (1S,2S)-1,2-dihydroxyindolizine. The dioxygenase swnH1 then performs the conversion of the 1,2-dihydroxyindolizine epimers to SW. This chain is Oxidoreductase swnR, found in Metarhizium robertsii (strain ARSEF 23 / ATCC MYA-3075) (Metarhizium anisopliae (strain ARSEF 23)).